The primary structure comprises 328 residues: Tetraacyldisaccharide 4'-kinase (328 aa).

Position 55–62 (55–62 (TAGGNGKT)) interacts with ATP.

Belongs to the LpxK family.

It catalyses the reaction a lipid A disaccharide + ATP = a lipid IVA + ADP + H(+). The protein operates within glycolipid biosynthesis; lipid IV(A) biosynthesis; lipid IV(A) from (3R)-3-hydroxytetradecanoyl-[acyl-carrier-protein] and UDP-N-acetyl-alpha-D-glucosamine: step 6/6. Functionally, transfers the gamma-phosphate of ATP to the 4'-position of a tetraacyldisaccharide 1-phosphate intermediate (termed DS-1-P) to form tetraacyldisaccharide 1,4'-bis-phosphate (lipid IVA). The polypeptide is Tetraacyldisaccharide 4'-kinase (Yersinia enterocolitica serotype O:8 / biotype 1B (strain NCTC 13174 / 8081)).